The following is a 455-amino-acid chain: Bifunctional protein GlmU (455 aa).

The tract at residues 1 to 229 (MLNSAMSVVI…ISETEGVNNR (229 aa)) is pyrophosphorylase. UDP-N-acetyl-alpha-D-glucosamine is bound by residues 11 to 14 (LAAG), lysine 25, glutamine 76, 81 to 82 (GT), 103 to 105 (YGD), glycine 140, glutamate 154, asparagine 169, and asparagine 227. Aspartate 105 provides a ligand contact to Mg(2+). Asparagine 227 is a Mg(2+) binding site. The interval 230–250 (LQLSRLERIYQAEQAEKLLLA) is linker. Residues 251–455 (GVMLRDPARF…KQGWQRPVKK (205 aa)) are N-acetyltransferase. UDP-N-acetyl-alpha-D-glucosamine is bound by residues arginine 333 and lysine 351. The Proton acceptor role is filled by histidine 363. UDP-N-acetyl-alpha-D-glucosamine-binding residues include tyrosine 366 and asparagine 377. Residues alanine 380, 386 to 387 (NY), serine 405, alanine 423, and arginine 440 contribute to the acetyl-CoA site.

It in the N-terminal section; belongs to the N-acetylglucosamine-1-phosphate uridyltransferase family. The protein in the C-terminal section; belongs to the transferase hexapeptide repeat family. Homotrimer. Requires Mg(2+) as cofactor.

Its subcellular location is the cytoplasm. It carries out the reaction alpha-D-glucosamine 1-phosphate + acetyl-CoA = N-acetyl-alpha-D-glucosamine 1-phosphate + CoA + H(+). It catalyses the reaction N-acetyl-alpha-D-glucosamine 1-phosphate + UTP + H(+) = UDP-N-acetyl-alpha-D-glucosamine + diphosphate. The protein operates within nucleotide-sugar biosynthesis; UDP-N-acetyl-alpha-D-glucosamine biosynthesis; N-acetyl-alpha-D-glucosamine 1-phosphate from alpha-D-glucosamine 6-phosphate (route II): step 2/2. It functions in the pathway nucleotide-sugar biosynthesis; UDP-N-acetyl-alpha-D-glucosamine biosynthesis; UDP-N-acetyl-alpha-D-glucosamine from N-acetyl-alpha-D-glucosamine 1-phosphate: step 1/1. Its pathway is bacterial outer membrane biogenesis; LPS lipid A biosynthesis. Functionally, catalyzes the last two sequential reactions in the de novo biosynthetic pathway for UDP-N-acetylglucosamine (UDP-GlcNAc). The C-terminal domain catalyzes the transfer of acetyl group from acetyl coenzyme A to glucosamine-1-phosphate (GlcN-1-P) to produce N-acetylglucosamine-1-phosphate (GlcNAc-1-P), which is converted into UDP-GlcNAc by the transfer of uridine 5-monophosphate (from uridine 5-triphosphate), a reaction catalyzed by the N-terminal domain. In Salmonella arizonae (strain ATCC BAA-731 / CDC346-86 / RSK2980), this protein is Bifunctional protein GlmU.